The following is a 318-amino-acid chain: Coproporphyrin III ferrochelatase (318 aa).

2 residues coordinate Fe(2+): His186 and Glu268.

Belongs to the ferrochelatase family.

The protein resides in the cytoplasm. The enzyme catalyses Fe-coproporphyrin III + 2 H(+) = coproporphyrin III + Fe(2+). It functions in the pathway porphyrin-containing compound metabolism; protoheme biosynthesis. Its function is as follows. Involved in coproporphyrin-dependent heme b biosynthesis. Catalyzes the insertion of ferrous iron into coproporphyrin III to form Fe-coproporphyrin III. This Lactococcus lactis subsp. cremoris (strain SK11) protein is Coproporphyrin III ferrochelatase.